We begin with the raw amino-acid sequence, 703 residues long: Calpain-8 (703 aa).

The region spanning 45–344 (LFKDPEFPAC…YSRLEICNLS (300 aa)) is the Calpain catalytic domain. Active-site residues include C105, H262, and N286. Residues 355–512 (KWNLVLFNGR…VFSEKKAKAL (158 aa)) are domain III. A linker region spans residues 513–531 (EIGDTVSGHPHEPHPRDMD). 4 consecutive EF-hand domains span residues 532–566 (EEDE…VLSK), 575–608 (FNIN…LKIR), 605–640 (LKIR…AGFT), and 670–703 (IRLE…CVLV). The tract at residues 532 to 703 (EEDEHVRSLF…LAEWLCCVLV (172 aa)) is domain IV. Residues D588, D590, T592, S594, E599, D618, N620, T624, and E629 each contribute to the Ca(2+) site.

The protein belongs to the peptidase C2 family. In terms of assembly, monomer and homooligomer. Interacts with COPS1/GPS1, COPB1, EYA2, NME2, NME4 and TOMM70. Ca(2+) is required as a cofactor. Undergoes autolytic cleavage between Ala-5 and Ala-6 which gives rise to fragments extending from Ala-6 to the C-terminus, Ala-6 to the EF-hand 2 domain and from Ala-6 to the beginning of domain III. Predominantly expressed in the stomach. Localizes strictly to the surface mucus cells in the gastric epithelium and the mucus-secreting goblet cells in the duodenum. Detected in the pituitary after estrogen stimulation.

It localises to the cytoplasm. Its subcellular location is the golgi apparatus. The enzyme catalyses Broad endopeptidase specificity.. Its function is as follows. Calcium-regulated non-lysosomal thiol-protease. Involved in membrane trafficking in the gastric surface mucus cells (pit cells) and may involve the membrane trafficking of mucus cells via interactions with coat protein. Proteolytically cleaves the beta-subunit of coatomer complex. The polypeptide is Calpain-8 (Capn8) (Rattus norvegicus (Rat)).